The sequence spans 458 residues: Argininosuccinate lyase (458 aa).

It belongs to the lyase 1 family. Argininosuccinate lyase subfamily.

The protein localises to the cytoplasm. It carries out the reaction 2-(N(omega)-L-arginino)succinate = fumarate + L-arginine. It functions in the pathway amino-acid biosynthesis; L-arginine biosynthesis; L-arginine from L-ornithine and carbamoyl phosphate: step 3/3. In Salmonella paratyphi B (strain ATCC BAA-1250 / SPB7), this protein is Argininosuccinate lyase.